A 279-amino-acid chain; its full sequence is Pantothenate synthetase (279 aa).

26-33 (MGNLHDGH) provides a ligand contact to ATP. His-33 (proton donor) is an active-site residue. Gln-57 contacts (R)-pantoate. Gln-57 provides a ligand contact to beta-alanine. 144–147 (GKKD) provides a ligand contact to ATP. Gln-150 is a binding site for (R)-pantoate. ATP is bound at residue 181-184 (LSSR).

Belongs to the pantothenate synthetase family. Homodimer.

The protein localises to the cytoplasm. The catalysed reaction is (R)-pantoate + beta-alanine + ATP = (R)-pantothenate + AMP + diphosphate + H(+). Its pathway is cofactor biosynthesis; (R)-pantothenate biosynthesis; (R)-pantothenate from (R)-pantoate and beta-alanine: step 1/1. In terms of biological role, catalyzes the condensation of pantoate with beta-alanine in an ATP-dependent reaction via a pantoyl-adenylate intermediate. The polypeptide is Pantothenate synthetase (Herminiimonas arsenicoxydans).